A 105-amino-acid polypeptide reads, in one-letter code: Large ribosomal subunit protein uL24 (105 aa).

It belongs to the universal ribosomal protein uL24 family. As to quaternary structure, part of the 50S ribosomal subunit.

Its function is as follows. One of two assembly initiator proteins, it binds directly to the 5'-end of the 23S rRNA, where it nucleates assembly of the 50S subunit. One of the proteins that surrounds the polypeptide exit tunnel on the outside of the subunit. The polypeptide is Large ribosomal subunit protein uL24 (Staphylococcus haemolyticus (strain JCSC1435)).